The sequence spans 470 residues: Ribulose bisphosphate carboxylase large chain (470 aa).

Substrate is bound by residues Asn-115 and Thr-165. The active-site Proton acceptor is Lys-167. Lys-169 serves as a coordination point for substrate. Positions 193, 195, and 196 each coordinate Mg(2+). Lys-193 carries the N6-carboxylysine modification. Catalysis depends on His-286, which acts as the Proton acceptor. Substrate-binding residues include Arg-287, His-319, and Ser-371.

It belongs to the RuBisCO large chain family. Type I subfamily. In terms of assembly, heterohexadecamer of 8 large chains and 8 small chains. Mg(2+) serves as cofactor.

It localises to the carboxysome. The catalysed reaction is 2 (2R)-3-phosphoglycerate + 2 H(+) = D-ribulose 1,5-bisphosphate + CO2 + H2O. It carries out the reaction D-ribulose 1,5-bisphosphate + O2 = 2-phosphoglycolate + (2R)-3-phosphoglycerate + 2 H(+). RuBisCO catalyzes two reactions: the carboxylation of D-ribulose 1,5-bisphosphate, the primary event in carbon dioxide fixation, as well as the oxidative fragmentation of the pentose substrate in the photorespiration process. Both reactions occur simultaneously and in competition at the same active site. This chain is Ribulose bisphosphate carboxylase large chain, found in Prochlorococcus marinus (strain MIT 9303).